The primary structure comprises 109 residues: Spermidine export protein MdtI (109 aa).

The next 4 helical transmembrane spans lie at 6 to 26 (WVHAAWLAMAIVLEIVANVFL), 36 to 56 (FYGILSLAAVLAAFSALSQAV), 64 to 84 (AYALWGGFGIAATLAAGWVLF), and 88 to 108 (LNNKGWVGVVLLLIGMIMIKL).

The protein belongs to the drug/metabolite transporter (DMT) superfamily. Small multidrug resistance (SMR) (TC 2.A.7.1) family. MdtI subfamily. As to quaternary structure, forms a complex with MdtJ.

The protein localises to the cell inner membrane. In terms of biological role, catalyzes the excretion of spermidine. This Citrobacter koseri (strain ATCC BAA-895 / CDC 4225-83 / SGSC4696) protein is Spermidine export protein MdtI.